The primary structure comprises 477 residues: Glycogen synthase (477 aa).

Lys15 serves as a coordination point for ADP-alpha-D-glucose.

It belongs to the glycosyltransferase 1 family. Bacterial/plant glycogen synthase subfamily.

The enzyme catalyses [(1-&gt;4)-alpha-D-glucosyl](n) + ADP-alpha-D-glucose = [(1-&gt;4)-alpha-D-glucosyl](n+1) + ADP + H(+). It participates in glycan biosynthesis; glycogen biosynthesis. Functionally, synthesizes alpha-1,4-glucan chains using ADP-glucose. In Klebsiella pneumoniae subsp. pneumoniae (strain ATCC 700721 / MGH 78578), this protein is Glycogen synthase.